Consider the following 282-residue polypeptide: Trihydroxynaphthalene reductase PfmaI (282 aa).

The NADP(+) site is built by I41, N114, and R147. Residues S164 and Y178 each act as proton donor in the active site. Residues Y178, K182, I211, and T213 each contribute to the NADP(+) site. Residue K182 is the Lowers pKa of active site Tyr of the active site.

Belongs to the short-chain dehydrogenases/reductases (SDR) family.

It participates in pigment biosynthesis; melanin biosynthesis. In terms of biological role, trihydroxynaphthalene reductase involved the biosynthesis of dihydroxynaphthalene (DHN)-melanin, a bluish-green pigment forming a dark layer in the conidial wall that protects the conidia from UV radiations. The first step of the pathway is the production of the pentaketide 1,3,6,8-tetrahydroxynaphthalene (1,3,6,8-THN or T4HN) by the polyketide synthase PfmaE though condensation of acetyl-CoA with malonyl-CoA. T4HN is not stable and easily oxidizes into the stable form flaviolin. T4HN is also substrate of the hydroxynaphthalene reductase PfmaG to yield scytalone. The scytalone dehydratase PfmaJ then reduces scytalone to 1,3,8-THN. 1,3,8-THN is then substrate of the hydroxynaphthalene reductase PfmaI to yield vermelone. Vermelone is further converted by the multicopper oxidase PfmaD to 1,8-DHN. Finally the laccase PFICI_06862 transforms 1,8-DHN to DHN-melanin. The roles of the 5-oxoprolinase PfmaA and the proline iminopeptidase PfmaB within the cluster have not been elucidated yet. The chain is Trihydroxynaphthalene reductase PfmaI from Pestalotiopsis fici (strain W106-1 / CGMCC3.15140).